Here is a 282-residue protein sequence, read N- to C-terminus: Sulfur carrier protein FdhD (282 aa).

The Cysteine persulfide intermediate role is filled by cysteine 115.

This sequence belongs to the FdhD family.

It is found in the cytoplasm. Its function is as follows. Required for formate dehydrogenase (FDH) activity. Acts as a sulfur carrier protein that transfers sulfur from IscS to the molybdenum cofactor prior to its insertion into FDH. The chain is Sulfur carrier protein FdhD from Streptomyces coelicolor (strain ATCC BAA-471 / A3(2) / M145).